A 140-amino-acid chain; its full sequence is PDZ domain-containing protein 11 (140 aa).

The PDZ domain maps to 47–129 (IVTLKKPPGA…ISMRVRFFPY (83 aa)).

Interacts with ATP2B1, ATP2B2, ATP2B3, ATP2B4 and ATP7A. Interacts with PLEKHA7 (via WW domains) at zonula adherens; this interaction is essential for the interaction between PLEKHA7 and the ADAM10-binding protein TSPAN33. Interacts with SLC5A6.

It is found in the cytoplasm. Its subcellular location is the cell junction. The protein resides in the adherens junction. It localises to the cell membrane. Mediates docking of ADAM10 to zonula adherens by interacting with PLEKHA7 which is required for PLEKHA7 to interact with the ADAM10-binding protein TSPAN33. This Bos taurus (Bovine) protein is PDZ domain-containing protein 11 (PDZD11).